The sequence spans 390 residues: GLH-binding kinase 1 (390 aa).

The 301-residue stretch at 38–338 (YVNLSFLNAG…VEDALNHPYV (301 aa)) folds into the Protein kinase domain. ATP is bound by residues 44-52 (LNAGAQGTV) and Lys67. Asp164 serves as the catalytic Proton acceptor. Ser198 carries the post-translational modification Phosphoserine. The residue at position 200 (Tyr200) is a Phosphotyrosine.

This sequence belongs to the protein kinase superfamily. CMGC Ser/Thr protein kinase family. MAP kinase subfamily. Interacts with glh-1, glh-2 (via C-terminus), glh-3 (via C-terminus) and glh-4 (via C-terminus). Interacts with csn-5; the interaction may prevent glh-1 degradation induced by kgb-1. Interacts with fos-1. The cofactor is Mg(2+). In terms of processing, may be phosphorylated by mek-1 on Ser-198 and/or Tyr-200. Phosphorylation is induced upon Cu(2+) and arsenite-mediated cell stimulation and by fasting. As to expression, expressed in somatic and germline tissues.

The protein localises to the cytoplasm. The enzyme catalyses L-seryl-[protein] + ATP = O-phospho-L-seryl-[protein] + ADP + H(+). It carries out the reaction L-threonyl-[protein] + ATP = O-phospho-L-threonyl-[protein] + ADP + H(+). Its activity is regulated as follows. Activated by mek-1 mediated phosphorylation. No differences in basal activation between larvae and adults. Inhibited by phosphatase vhp-1. Mitogen-activated protein kinase which is an essential component of the JNK pathway composed of mlk-1, mek-1 and kgb-1. Phosphorylates the transcription factor fos-1 which prevents fos-1 dimerization and promoter binding and results in activation of target genes including F53A9.2/kreg-1 and lys-3/kreg-2. Phosphorylates jun-1 and activates the AP-1 transcription factor which is a heterodimer of jun-1 and fos-1. Phosphorylates glh-1 in vitro which may play a role in controlling glh-1 protein levels in the germline by targeting it for degradation by the proteasome. Required for oogenesis and probably also for spermatogenesis. Involved in the response to environmental stress such as heavy metals, infection and protein folding stress in an age-dependent manner. In larvae, has a protective role which becomes detrimental in adults. May control susceptibility to infection, heavy metal stress and premature lethality by regulating daf-16 cellular localization. Involved in the transcriptional response to bacterial pore-forming toxins and to fasting. Required for fasting-induced longevity. Involved in axon regeneration after injury downstream of tyrosine receptor svh-2. This is GLH-binding kinase 1 from Caenorhabditis elegans.